The sequence spans 298 residues: Formylmethanofuran--tetrahydromethanopterin formyltransferase (298 aa).

It belongs to the FTR family. In terms of assembly, homotetramer.

Its subcellular location is the cytoplasm. The catalysed reaction is N-formylmethanofuran + 5,6,7,8-tetrahydromethanopterin + H(+) = N(5)-formyl-5,6,7,8-tetrahydromethanopterin + methanofuran. The protein operates within one-carbon metabolism; formaldehyde degradation; formate from formaldehyde (H(4)MPT route): step 4/5. Catalyzes the transfer of a formyl group from 5-formyl tetrahydromethanopterin (5-formyl-H(4)MPT) to methanofuran (MFR) to produce formylmethanofuran (formyl-MFR) and tetrahydromethanopterin (H(4)MPT). This chain is Formylmethanofuran--tetrahydromethanopterin formyltransferase, found in Methylococcus capsulatus (strain ATCC 33009 / NCIMB 11132 / Bath).